A 587-amino-acid chain; its full sequence is Pyruvate decarboxylase 3 (587 aa).

Aspartate 48 and histidine 135 together coordinate substrate. A thiamine pyrophosphate binding region spans residues 415 to 496 (DSWFNCQKLR…FLINNGGYTI (82 aa)). Mg(2+)-binding residues include aspartate 464, asparagine 491, and glycine 493. Glutamate 497 provides a ligand contact to substrate.

It belongs to the TPP enzyme family. As to quaternary structure, homotetramer. Requires a metal cation as cofactor. Thiamine diphosphate serves as cofactor.

It catalyses the reaction a 2-oxocarboxylate + H(+) = an aldehyde + CO2. This is Pyruvate decarboxylase 3 (PDC3) from Oryza sativa subsp. indica (Rice).